A 347-amino-acid chain; its full sequence is NADH-ubiquinone oxidoreductase chain 2 (347 aa).

The next 11 helical transmembrane spans lie at 3 to 23 (PPIL…VLTS), 25 to 45 (HWLT…PILM), 59 to 79 (YLLT…IDLL), 96 to 116 (AMMT…FWVP), 122 to 142 (IHMS…LSIL), 149 to 169 (INPN…GWGG), 178 to 198 (ILAY…LYNP), 200 to 220 (MMIL…MLFM), 237 to 257 (APLI…LPPL), 274 to 294 (EMII…YFYM), and 325 to 345 (LLSP…LLSI).

The protein belongs to the complex I subunit 2 family. As to quaternary structure, core subunit of respiratory chain NADH dehydrogenase (Complex I) which is composed of 45 different subunits. Interacts with TMEM242.

The protein resides in the mitochondrion inner membrane. It carries out the reaction a ubiquinone + NADH + 5 H(+)(in) = a ubiquinol + NAD(+) + 4 H(+)(out). Its function is as follows. Core subunit of the mitochondrial membrane respiratory chain NADH dehydrogenase (Complex I) which catalyzes electron transfer from NADH through the respiratory chain, using ubiquinone as an electron acceptor. Essential for the catalytic activity and assembly of complex I. In Cynictis penicillata (Yellow mongoose), this protein is NADH-ubiquinone oxidoreductase chain 2.